The following is a 409-amino-acid chain: NADH-quinone oxidoreductase subunit D (409 aa).

It belongs to the complex I 49 kDa subunit family. As to quaternary structure, NDH-1 is composed of 14 different subunits. Subunits NuoB, C, D, E, F, and G constitute the peripheral sector of the complex.

Its subcellular location is the cell inner membrane. It catalyses the reaction a quinone + NADH + 5 H(+)(in) = a quinol + NAD(+) + 4 H(+)(out). Functionally, NDH-1 shuttles electrons from NADH, via FMN and iron-sulfur (Fe-S) centers, to quinones in the respiratory chain. The immediate electron acceptor for the enzyme in this species is believed to be ubiquinone. Couples the redox reaction to proton translocation (for every two electrons transferred, four hydrogen ions are translocated across the cytoplasmic membrane), and thus conserves the redox energy in a proton gradient. This Helicobacter pylori (strain HPAG1) protein is NADH-quinone oxidoreductase subunit D.